The following is a 356-amino-acid chain: Uroporphyrinogen decarboxylase (356 aa).

Coproporphyrinogen I contacts are provided by arginine 33, alanine 35, arginine 37, arginine 46, aspartate 82, tyrosine 159, serine 214, and histidine 334. Coproporphyrinogen III is bound by residues arginine 33, alanine 35, and arginine 37. Positions 82, 159, 214, and 334 each coordinate coproporphyrinogen III.

This sequence belongs to the uroporphyrinogen decarboxylase family. Homodimer.

Its subcellular location is the cytoplasm. It localises to the cytosol. It carries out the reaction uroporphyrinogen III + 4 H(+) = coproporphyrinogen III + 4 CO2. It participates in porphyrin-containing compound metabolism; protoporphyrin-IX biosynthesis; coproporphyrinogen-III from 5-aminolevulinate: step 4/4. Catalyzes the decarboxylation of four acetate groups of uroporphyrinogen-III to yield coproporphyrinogen-III. The sequence is that of Uroporphyrinogen decarboxylase from Drosophila melanogaster (Fruit fly).